Here is a 272-residue protein sequence, read N- to C-terminus: MLNLNELKSGFHYFVMGWHFITQKGLRRFVIIPILLNTILLCGLFWLFISQISSAIDWVMNFIPDWLSFLSVILLTLSILTILLLFYFTFTTFSGFIAAPFNGLLAEKVEKMLTEENINDDSLVDIMRDVPRMLAREWQKLRYSLPKIIALFLLSFIPLVGQTIVPVLTFLFTCWMMAIQYCDYPFDNHKVSFDIMKTALGNQRTQSLTFGGLVTCCTFVPVINLLIMPVAVCGATLMWVENYRNDLGFNMNRSFSSQTGLDVRSENTGIVK.

Helical transmembrane passes span 29–49 (FVII…WLFI), 66–86 (WLSF…LLLF), 148–168 (IIAL…VPVL), and 219–239 (FVPV…TLMW).

This sequence belongs to the CysZ family.

It localises to the cell inner membrane. Functionally, high affinity, high specificity proton-dependent sulfate transporter, which mediates sulfate uptake. Provides the sulfur source for the cysteine synthesis pathway. The protein is Sulfate transporter CysZ of Haemophilus influenzae (strain 86-028NP).